Reading from the N-terminus, the 302-residue chain is Citrate lyase subunit beta (302 aa).

Substrate-binding residues include arginine 76 and glutamate 139. Mg(2+) is bound by residues glutamate 139 and aspartate 166.

This sequence belongs to the HpcH/HpaI aldolase family. Citrate lyase beta subunit subfamily. In terms of assembly, oligomer with a subunit composition of (alpha,beta,gamma)6. It depends on Mg(2+) as a cofactor.

The protein resides in the cytoplasm. It catalyses the reaction citrate = oxaloacetate + acetate. The enzyme catalyses (3S)-citryl-CoA = oxaloacetate + acetyl-CoA. Its function is as follows. Represents a citryl-ACP lyase. In Escherichia coli O6:H1 (strain CFT073 / ATCC 700928 / UPEC), this protein is Citrate lyase subunit beta (citE).